The primary structure comprises 93 residues: Microcin N immunity protein (93 aa).

A run of 3 helical transmembrane segments spans residues 3–23, 36–56, and 68–88; these read FLNFAFSPVFFSIMACYFIVW, LSIIIISFLICFIYPWLNYKI, and LFCFLSSLVAVVINLIVYFIL.

The protein belongs to the MceB microcin immunity protein family.

The protein localises to the cell inner membrane. In terms of biological role, probably able to protect the producing cell against microcin N (microcin 24). In Escherichia coli, this protein is Microcin N immunity protein.